The primary structure comprises 294 residues: MGEGKNHQSFSFKNADDEIDLSLSKFSLFKLKMAKSKIIKVFGQNDPVDPNNCYINMRSIKITTSSVLPESDPKYLIWEMSYKTDEEDHTLGQLAWKASYNGTFIVTTTYAMMVTGGELYTPYTAVIRSSDGNEIKGVKVKVTLSWDPANDRPSKARMGGFIQDMYCKTITNGKTQISPMVGWYIGQDERRYCKVLNKSALEFSSEGIYPLMELVSGADSVINPLINKLISGMLNDEEKRRVSLYTSTVGAGTSLTQSEKLLLKKLVESKTGSGLVQFLMRACKELGTDVYLEA.

As to quaternary structure, interacts with nucleoprotein.

In terms of biological role, transports viral genome to neighboring plant cells directly through plasmosdesmata, without any budding. The movement protein allows efficient cell to cell propagation, by bypassing the host cell wall barrier. Displays an RNA-binding activity. The chain is Movement protein (3) from Rice yellow stunt virus (RYSV).